Consider the following 306-residue polypeptide: Homoserine kinase (306 aa).

An ATP-binding site is contributed by 91 to 101 (PLARGLGSSAA).

This sequence belongs to the GHMP kinase family. Homoserine kinase subfamily.

The protein localises to the cytoplasm. It carries out the reaction L-homoserine + ATP = O-phospho-L-homoserine + ADP + H(+). It participates in amino-acid biosynthesis; L-threonine biosynthesis; L-threonine from L-aspartate: step 4/5. Functionally, catalyzes the ATP-dependent phosphorylation of L-homoserine to L-homoserine phosphate. This chain is Homoserine kinase, found in Bacillus licheniformis (strain ATCC 14580 / DSM 13 / JCM 2505 / CCUG 7422 / NBRC 12200 / NCIMB 9375 / NCTC 10341 / NRRL NRS-1264 / Gibson 46).